We begin with the raw amino-acid sequence, 162 residues long: Ribonuclease (162 aa).

A signal peptide spans M1–A29. The propeptide occupies E30–L53. Catalysis depends on E125, which acts as the Proton acceptor. The active-site Proton donor is H154.

Belongs to the ribonuclease N1/T1 family.

The protein resides in the secreted. Functionally, this is a purine-specific ribonuclease. This chain is Ribonuclease, found in Bacillus intermedius.